The following is a 343-amino-acid chain: L-threonine 3-dehydrogenase (343 aa).

Cys-40 lines the Zn(2+) pocket. Catalysis depends on charge relay system residues Thr-42 and His-45. Positions 65, 66, 95, 98, 101, and 109 each coordinate Zn(2+). Residues Ile-177, Asp-197, Arg-202, 264 to 266 (LGI), and 288 to 289 (IY) contribute to the NAD(+) site.

It belongs to the zinc-containing alcohol dehydrogenase family. As to quaternary structure, homotetramer. The cofactor is Zn(2+).

Its subcellular location is the cytoplasm. The enzyme catalyses L-threonine + NAD(+) = (2S)-2-amino-3-oxobutanoate + NADH + H(+). It participates in amino-acid degradation; L-threonine degradation via oxydo-reductase pathway; glycine from L-threonine: step 1/2. In terms of biological role, catalyzes the NAD(+)-dependent oxidation of L-threonine to 2-amino-3-ketobutyrate. The chain is L-threonine 3-dehydrogenase from Vibrio vulnificus (strain CMCP6).